The chain runs to 457 residues: Arginine biosynthesis bifunctional protein ArgJ, mitochondrial (457 aa).

Substrate contacts are provided by T184, K213, T224, E312, N452, and T457. The active-site Nucleophile is T224.

It belongs to the ArgJ family. Heterodimer of an alpha and a beta chain. The alpha and beta chains are autoproteolytically processed from a single precursor protein within the mitochondrion.

The protein resides in the mitochondrion matrix. It carries out the reaction N(2)-acetyl-L-ornithine + L-glutamate = N-acetyl-L-glutamate + L-ornithine. The catalysed reaction is L-glutamate + acetyl-CoA = N-acetyl-L-glutamate + CoA + H(+). Its pathway is amino-acid biosynthesis; L-arginine biosynthesis; L-ornithine and N-acetyl-L-glutamate from L-glutamate and N(2)-acetyl-L-ornithine (cyclic): step 1/1. The protein operates within amino-acid biosynthesis; L-arginine biosynthesis; N(2)-acetyl-L-ornithine from L-glutamate: step 1/4. Its function is as follows. Catalyzes two activities which are involved in the cyclic version of arginine biosynthesis: the synthesis of acetylglutamate from glutamate and acetyl-CoA, and of ornithine by transacetylation between acetylornithine and glutamate. This chain is Arginine biosynthesis bifunctional protein ArgJ, mitochondrial, found in Aspergillus terreus (strain NIH 2624 / FGSC A1156).